A 369-amino-acid polypeptide reads, in one-letter code: UDP-N-acetyl-3-dehydro-alpha-D-glucosamine 3-aminotranferase (369 aa).

Lysine 190 carries the N6-(pyridoxal phosphate)lysine modification.

This sequence belongs to the DegT/DnrJ/EryC1 family. Pyridoxal 5'-phosphate serves as cofactor.

The enzyme catalyses UDP-2-acetamido-3-amino-2,3-dideoxy-alpha-D-glucopyranose + 2-oxoglutarate = UDP-2-acetamido-3-dehydro-2-deoxy-alpha-D-glucopyranose + L-glutamate. It functions in the pathway bacterial outer membrane biogenesis; LPS lipid A biosynthesis. In terms of biological role, aminotranferase involved in the synthesis of 2,3-diamino-2,3-dideoxy-D-glucopyranose (GlcN3N), which is a component of lipid A in some species. Catalyzes the amination of UDP-2-acetamido-3-dehydro-2-deoxy-alpha-D-glucopyranose (UDP-3-oxo-GlcNAc) to UDP-2-acetamido-3-amino-2,3-dideoxy-alpha-D-glucopyranose (UDP-GlcNAc3N), using L-glutamate as the amine donor. Other amine donors, such as alanine and glutamine, can substitute for glutamate, but product formation is slower. This is UDP-N-acetyl-3-dehydro-alpha-D-glucosamine 3-aminotranferase from Acidithiobacillus ferrooxidans (strain ATCC 23270 / DSM 14882 / CIP 104768 / NCIMB 8455) (Ferrobacillus ferrooxidans (strain ATCC 23270)).